A 118-amino-acid chain; its full sequence is Urease subunit beta (118 aa).

This sequence belongs to the urease beta subunit family. As to quaternary structure, heterotrimer of UreA (gamma), UreB (beta) and UreC (alpha) subunits. Three heterotrimers associate to form the active enzyme.

It localises to the cytoplasm. It catalyses the reaction urea + 2 H2O + H(+) = hydrogencarbonate + 2 NH4(+). It participates in nitrogen metabolism; urea degradation; CO(2) and NH(3) from urea (urease route): step 1/1. This chain is Urease subunit beta, found in Aliivibrio fischeri (strain MJ11) (Vibrio fischeri).